The sequence spans 5085 residues: Linear gramicidin synthase subunit D (5085 aa).

4 Carrier domains span residues 962–1037 (APRT…AAAG), 2023–2097 (SPST…EEKA), 3544–3619 (APRN…ELLT), and 4601–4676 (APQT…EEII). O-(pantetheine 4'-phosphoryl)serine is present on residues S997, S2058, S3579, and S4636.

The protein belongs to the ATP-dependent AMP-binding enzyme family. As to quaternary structure, large multienzyme complex composed of 4 subunits; LgrA, LgrB, LgrC and LgrD. Pantetheine 4'-phosphate serves as cofactor.

Its function is as follows. Activates the 13th to the 16th (Trp, D-Leu, Trp and Gly) amino acids in linear gramicidin and catalyzes the formation of the peptide bond between them. This enzyme is also responsible for the epimerization of the 14th (D-Leu) amino acid. It also catalyzes the NAD(P)H-dependent reduction of the C-terminal glycine residue of the N-formylated 16-mer peptide, that binds to the peptidyl carrier domain of the terminal module of this protein, to form a peptidyl-aldehyde intermediate that is released from the enzyme complex. This is Linear gramicidin synthase subunit D (lgrD) from Brevibacillus parabrevis.